Reading from the N-terminus, the 484-residue chain is MQEGKNIWSLILAAIRKELSEEEFYIWFENLYFIDAIGENIKIATPNSFHKNQVEKRFSKRIKEILIEKGHSTINVEFIHSQNELKDHNTESKDISLKAITHQQDLQTKNKDIKTHAKNIINNTKQYSIKEEIHIKYRNPFLKKKYTFENFIIGTNNKLAYNASLSIAKNPGKKYNPCLIYGGVGLGKTHLLQSIGNKTEELHKEFKILYVTAENFLNEFVESIKTNETKRFKKKYRHLDMLLLDDIHDLQKKEGIQEELFHTFNALYEDNKQMVFTCDRQPSELVNFTDRLKSRFTRGLNVDISKPNFELRVAIIEKKAEEDGIKVPKNILNLVAKKVTTNIRDLEAAVTKLKAHIDLEDIEIDTNIVDKIIKEIIAYENDNTNTPNKINIENIKKVILRELKLTNKDIEGNSKKPEITKARHIYAYLLRNFTELSTIEIGKIIGGKTHSTVLYSINKIDKDRNKNLEINNLIIELMNKINKN.

The tract at residues 1 to 73 (MQEGKNIWSL…EILIEKGHST (73 aa)) is domain I, interacts with DnaA modulators. Positions 73-140 (TINVEFIHSQ…EEIHIKYRNP (68 aa)) are domain II. The domain III, AAA+ region stretch occupies residues 141-357 (FLKKKYTFEN…AAVTKLKAHI (217 aa)). Residues G185, G187, K188, and T189 each contribute to the ATP site. The segment at 358-484 (DLEDIEIDTN…IELMNKINKN (127 aa)) is domain IV, binds dsDNA.

It belongs to the DnaA family. In terms of assembly, oligomerizes as a right-handed, spiral filament on DNA at oriC.

It is found in the cytoplasm. In terms of biological role, plays an essential role in the initiation and regulation of chromosomal replication. ATP-DnaA binds to the origin of replication (oriC) to initiate formation of the DNA replication initiation complex once per cell cycle. Binds the DnaA box (a 9 base pair repeat at the origin) and separates the double-stranded (ds)DNA. Forms a right-handed helical filament on oriC DNA; dsDNA binds to the exterior of the filament while single-stranded (ss)DNA is stabiized in the filament's interior. The ATP-DnaA-oriC complex binds and stabilizes one strand of the AT-rich DNA unwinding element (DUE), permitting loading of DNA polymerase. After initiation quickly degrades to an ADP-DnaA complex that is not apt for DNA replication. Binds acidic phospholipids. The polypeptide is Chromosomal replication initiator protein DnaA (Borrelia duttonii (strain Ly)).